The sequence spans 98 residues: NADH-ubiquinone oxidoreductase chain 4L (98 aa).

3 consecutive transmembrane segments (helical) span residues 1–21 (MSMV…GLLM), 29–49 (SLLC…ITIM), and 61–81 (IILL…LVMI).

This sequence belongs to the complex I subunit 4L family. As to quaternary structure, core subunit of respiratory chain NADH dehydrogenase (Complex I) which is composed of 45 different subunits.

The protein resides in the mitochondrion inner membrane. It carries out the reaction a ubiquinone + NADH + 5 H(+)(in) = a ubiquinol + NAD(+) + 4 H(+)(out). In terms of biological role, core subunit of the mitochondrial membrane respiratory chain NADH dehydrogenase (Complex I) which catalyzes electron transfer from NADH through the respiratory chain, using ubiquinone as an electron acceptor. Part of the enzyme membrane arm which is embedded in the lipid bilayer and involved in proton translocation. This is NADH-ubiquinone oxidoreductase chain 4L (MT-ND4L) from Procyon lotor (Raccoon).